A 363-amino-acid chain; its full sequence is NudC domain-containing protein 3 (363 aa).

Positions 120 to 143 (AADLSGPQEVEKEEPPGSQDPEHT) are disordered. Basic and acidic residues predominate over residues 128 to 143 (EVEKEEPPGSQDPEHT). The 93-residue stretch at 187-279 (AIRENYIWSQ…VGEYWWSAIL (93 aa)) folds into the CS domain. A phosphoserine mark is found at Ser342 and Ser357.

The polypeptide is NudC domain-containing protein 3 (Nudcd3) (Mus musculus (Mouse)).